The primary structure comprises 496 residues: Putative ammonium transporter 1 member 5 (496 aa).

The next 11 membrane-spanning stretches (helical) occupy residues 50–70 (LLFS…LCAG), 85–105 (VLDA…FAFG), 131–151 (FFLY…GSIA), 156–176 (FVAY…VVSH), 202–222 (FAGS…GALI), 246–266 (LVVL…PGSF), 284–306 (GIGR…TLFG), 314–334 (WNVT…TAGC), 336–356 (VVDP…LIGC), 369–389 (LEAA…VGLF), and 422–442 (LVQI…LFFI). Position 485 is a phosphoserine (S485).

Belongs to the ammonia transporter channel (TC 1.A.11.2) family.

It localises to the membrane. Functionally, involved in ammonium transport. This is Putative ammonium transporter 1 member 5 (AMT1-5) from Arabidopsis thaliana (Mouse-ear cress).